Consider the following 367-residue polypeptide: UDP-N-acetylglucosamine--N-acetylmuramyl-(pentapeptide) pyrophosphoryl-undecaprenol N-acetylglucosamine transferase (367 aa).

Residues 15–17, asparagine 126, arginine 169, serine 197, and glutamine 298 contribute to the UDP-N-acetyl-alpha-D-glucosamine site; that span reads TGG.

This sequence belongs to the glycosyltransferase 28 family. MurG subfamily.

It localises to the cell inner membrane. The enzyme catalyses di-trans,octa-cis-undecaprenyl diphospho-N-acetyl-alpha-D-muramoyl-L-alanyl-D-glutamyl-meso-2,6-diaminopimeloyl-D-alanyl-D-alanine + UDP-N-acetyl-alpha-D-glucosamine = di-trans,octa-cis-undecaprenyl diphospho-[N-acetyl-alpha-D-glucosaminyl-(1-&gt;4)]-N-acetyl-alpha-D-muramoyl-L-alanyl-D-glutamyl-meso-2,6-diaminopimeloyl-D-alanyl-D-alanine + UDP + H(+). Its pathway is cell wall biogenesis; peptidoglycan biosynthesis. In terms of biological role, cell wall formation. Catalyzes the transfer of a GlcNAc subunit on undecaprenyl-pyrophosphoryl-MurNAc-pentapeptide (lipid intermediate I) to form undecaprenyl-pyrophosphoryl-MurNAc-(pentapeptide)GlcNAc (lipid intermediate II). The chain is UDP-N-acetylglucosamine--N-acetylmuramyl-(pentapeptide) pyrophosphoryl-undecaprenol N-acetylglucosamine transferase from Bradyrhizobium sp. (strain BTAi1 / ATCC BAA-1182).